Reading from the N-terminus, the 456-residue chain is PTS system sucrose-specific EIIBC component (456 aa).

Positions 4–87 (EQISCSLLPL…TQAAGISESS (84 aa)) constitute a PTS EIIB type-1 domain. The Phosphocysteine intermediate; for EIIB activity role is filled by C26. The 350-residue stretch at 107-456 (RLLSNIFVPI…LVLKYKTDAE (350 aa)) folds into the PTS EIIC type-1 domain. A run of 10 helical transmembrane segments spans residues 112-132 (IFVPIIPAIVASGLLMGLLGM), 144-164 (AIYIMLDMCSSAAFIILPILI), 181-201 (TLGGILTHPALTNAWGVAAGF), 213-233 (MIGYQGTVFPVLLAVWFMSIV), 247-267 (LILTPFLTVIISGFIALLIIG), 288-308 (AGWLAGLLFGGLYSVIVITGI), 329-349 (FLLPIWAMANVAQGGACLAVW), 360-380 (ITLPSAFSAMLGITEAAIFGI), 388-408 (FIAALIGGAAGGAWVVSVHVY), and 428-448 (LLNYIIGMVIAFGVAFTVSLV).

It is found in the cell inner membrane. It carries out the reaction N(pros)-phospho-L-histidyl-[protein](out) + sucrose = sucrose 6(G)-phosphate(in) + L-histidyl-[protein]. Functionally, the phosphoenolpyruvate-dependent sugar phosphotransferase system (sugar PTS), a major carbohydrate active transport system, catalyzes the phosphorylation of incoming sugar substrates concomitantly with their translocation across the cell membrane. This system is involved in sucrose transport. This chain is PTS system sucrose-specific EIIBC component, found in Salmonella typhimurium.